A 401-amino-acid chain; its full sequence is Phosphoglycerate kinase (401 aa).

Residues 21 to 23 (DFN), Arg36, 59 to 62 (HLGR), Arg119, and Arg160 contribute to the substrate site. Residues Lys212, Glu330, and 357 to 360 (GGDS) contribute to the ATP site.

Belongs to the phosphoglycerate kinase family. In terms of assembly, monomer.

Its subcellular location is the cytoplasm. It catalyses the reaction (2R)-3-phosphoglycerate + ATP = (2R)-3-phospho-glyceroyl phosphate + ADP. The protein operates within carbohydrate degradation; glycolysis; pyruvate from D-glyceraldehyde 3-phosphate: step 2/5. This is Phosphoglycerate kinase from Limosilactobacillus reuteri subsp. reuteri (strain JCM 1112) (Lactobacillus reuteri).